A 160-amino-acid polypeptide reads, in one-letter code: Cytochrome b6-f complex subunit 4 (160 aa).

3 helical membrane-spanning segments follow: residues 36 to 56 (ILYMFPVVILGILACDVGLSI), 95 to 115 (LVGVLSMASVPAGLITVPFIE), and 127 to 147 (PIATSVFLVGTIVAVWLGIGA).

The protein belongs to the cytochrome b family. PetD subfamily. As to quaternary structure, the 4 large subunits of the cytochrome b6-f complex are cytochrome b6, subunit IV (17 kDa polypeptide, petD), cytochrome f and the Rieske protein, while the 4 small subunits are petG, petL, petM and petN. The complex functions as a dimer.

It is found in the plastid. Its subcellular location is the chloroplast thylakoid membrane. In terms of biological role, component of the cytochrome b6-f complex, which mediates electron transfer between photosystem II (PSII) and photosystem I (PSI), cyclic electron flow around PSI, and state transitions. The protein is Cytochrome b6-f complex subunit 4 of Gracilaria tenuistipitata var. liui (Red alga).